The sequence spans 277 residues: Large ribosomal subunit protein uL2cz/uL2cy (277 aa).

Disordered stretches follow at residues Met-1–Lys-31 and Asn-227–Lys-277.

Belongs to the universal ribosomal protein uL2 family. As to quaternary structure, part of the 50S ribosomal subunit.

Its subcellular location is the plastid. It localises to the chloroplast. The chain is Large ribosomal subunit protein uL2cz/uL2cy (rpl2-A) from Manihot esculenta (Cassava).